We begin with the raw amino-acid sequence, 142 residues long: Large ribosomal subunit protein uL11 (142 aa).

This sequence belongs to the universal ribosomal protein uL11 family. In terms of assembly, part of the ribosomal stalk of the 50S ribosomal subunit. Interacts with L10 and the large rRNA to form the base of the stalk. L10 forms an elongated spine to which L12 dimers bind in a sequential fashion forming a multimeric L10(L12)X complex. In terms of processing, one or more lysine residues are methylated.

Functionally, forms part of the ribosomal stalk which helps the ribosome interact with GTP-bound translation factors. In Klebsiella pneumoniae (strain 342), this protein is Large ribosomal subunit protein uL11.